Consider the following 359-residue polypeptide: Type-1 angiotensin II receptor (359 aa).

Residues methionine 1–serine 25 lie on the Extracellular side of the membrane. Asparagine 4 carries an N-linked (GlcNAc...) asparagine glycan. Angiotensin II contacts are provided by glutamine 15 and aspartate 17. 2 cysteine pairs are disulfide-bonded: cysteine 18-cysteine 274 and cysteine 101-cysteine 180. A helical transmembrane segment spans residues tyrosine 26 to phenylalanine 55. The Cytoplasmic segment spans residues tyrosine 56–threonine 61. Residues valine 62–alanine 89 traverse the membrane as a helical segment. Over methionine 90–asparagine 98 the chain is Extracellular. Residues tyrosine 99 to aspartate 125 form a helical membrane-spanning segment. The Cytoplasmic segment spans residues arginine 126–threonine 141. A helical membrane pass occupies residues methionine 142–isoleucine 165. Topologically, residues histidine 166–threonine 190 are extracellular. Arginine 167 is an angiotensin II binding site. A glycan (N-linked (GlcNAc...) asparagine) is linked at asparagine 176. Residues phenylalanine 182, histidine 183, and tyrosine 184 each contribute to the angiotensin II site. Asparagine 188 carries N-linked (GlcNAc...) asparagine glycosylation. Residues leucine 191–threonine 216 traverse the membrane as a helical segment. Lysine 199 contributes to the angiotensin II binding site. The Cytoplasmic portion of the chain corresponds to leucine 217–phenylalanine 239. The helical transmembrane segment at lysine 240 to leucine 268 threads the bilayer. The Extracellular segment spans residues glycine 269–aspartate 278. Residues isoleucine 279–phenylalanine 304 form a helical membrane-spanning segment. At leucine 305–glutamate 359 the chain is on the cytoplasmic side. Residues leucine 337 to alanine 349 show a composition bias toward polar residues. Residues leucine 337–glutamate 359 are disordered. Residue cysteine 355 is the site of S-palmitoyl cysteine attachment.

The protein belongs to the G-protein coupled receptor 1 family. Interacts with MAS1. Interacts with ARRB1. Interacts with FLNA (via filamin repeat 21); increases PKA-mediated phosphorylation of FLNA. In terms of processing, C-terminal Ser or Thr residues may be phosphorylated. In terms of tissue distribution, expressed in liver, kidney, adrenal gland, heart and colon.

The protein localises to the cell membrane. Functionally, receptor for angiotensin II, a vasoconstricting peptide, which acts as a key regulator of blood pressure and sodium retention by the kidney. The activated receptor in turn couples to G-alpha proteins G(q) (GNAQ, GNA11, GNA14 or GNA15) and thus activates phospholipase C and increases the cytosolic Ca(2+) concentrations, which in turn triggers cellular responses such as stimulation of protein kinase C. The sequence is that of Type-1 angiotensin II receptor (AGTR1) from Cavia porcellus (Guinea pig).